The sequence spans 802 residues: Copper-exporting P-type ATPase (802 aa).

HMA domains are found at residues 5-70 (KKTT…YGVT) and 72-138 (ETVE…YDAS). Cu(+) is bound by residues Cys-16, Cys-19, Cys-83, and Cys-86. Helical transmembrane passes span 161 to 181 (LIIS…HLFN), 192 to 212 (WFQF…FYVG), 224 to 244 (MDVL…YEMV), 256 to 276 (LYFE…YLEA), 411 to 431 (YFVP…ITLV), and 438 to 458 (PALV…LGLA). Asp-495 functions as the 4-aspartylphosphate intermediate in the catalytic mechanism. Residues Asp-690 and Asp-694 each contribute to the Mg(2+) site. 2 consecutive transmembrane segments (helical) span residues 748–767 (LFWA…LGLL) and 771–790 (VAGA…ALRL).

The protein belongs to the cation transport ATPase (P-type) (TC 3.A.3) family. Type IB subfamily.

The protein localises to the cell membrane. The enzyme catalyses Cu(+)(in) + ATP + H2O = Cu(+)(out) + ADP + phosphate + H(+). Its function is as follows. Involved in copper export. This chain is Copper-exporting P-type ATPase (copA), found in Staphylococcus aureus (strain N315).